The primary structure comprises 504 residues: Protein psiD (504 aa).

An N-terminal signal peptide occupies residues 1–21 (MKYSYLLLILLLSNLYKEGFS). N-linked (GlcNAc...) asparagine glycans are attached at residues Asn-87, Asn-136, Asn-236, Asn-252, Asn-290, and Asn-373. A PA14 domain is found at 111-251 (LTRVGDSTYA…YDACGVCDGH (141 aa)). Residues 417-430 (TVTPTVTPTVTPTP) show a composition bias toward low complexity. Residues 417 to 453 (TVTPTVTPTVTPTPTTTPTPSPTTVPPRPTPTPLPAD) form a disordered region. Positions 431 to 453 (TTTPTPSPTTVPPRPTPTPLPAD) are enriched in pro residues. Asn-483 is a glycosylation site (N-linked (GlcNAc...) asparagine).

The protein belongs to the prespore-cell-inducing factor family.

The protein resides in the secreted. The chain is Protein psiD (psiD) from Dictyostelium discoideum (Social amoeba).